The chain runs to 238 residues: Large ribosomal subunit protein uL1 (238 aa).

This sequence belongs to the universal ribosomal protein uL1 family. As to quaternary structure, part of the 50S ribosomal subunit.

Its function is as follows. Binds directly to 23S rRNA. The L1 stalk is quite mobile in the ribosome, and is involved in E site tRNA release. Protein L1 is also a translational repressor protein, it controls the translation of the L11 operon by binding to its mRNA. The sequence is that of Large ribosomal subunit protein uL1 from Salinispora arenicola (strain CNS-205).